Reading from the N-terminus, the 143-residue chain is Alpha-S2-casein-like B (143 aa).

The first 15 residues, 1–15 (MKFIILTCLLAVALA), serve as a signal peptide directing secretion.

The protein belongs to the alpha-casein family. As to expression, mammary gland specific. Secreted in milk.

Its subcellular location is the secreted. Its function is as follows. Important role in the capacity of milk to transport calcium phosphate. The protein is Alpha-S2-casein-like B (Csn1s2b) of Mus musculus (Mouse).